Here is a 282-residue protein sequence, read N- to C-terminus: MELKFSCRGNVIALSFNENDTVLDAKEKLGQEIDVSPSLIKLLYKGNLSDDSHLQDVVKNESKIMCLIRQDKDIVNQAISQLKVPDYSTNTYSLKPKKPHTTPKPASIYTFNELVVLDYPHKDRALRYLERLRDDTGIKKIMDSHRWTVPLLSEMDPAEHTRHDSKTLGLNHNQGAHIELRLRTDRYDGFRDYKTVKSTLIHELTHNVHGEHDSSFWELFRQLTKEADAADLLGKPGSYVSDRASYTPQQDNDDEDQKNHRRDLLLAAAERRKQSGSKVQKE.

The 75-residue stretch at 1–75 (MELKFSCRGN…CLIRQDKDIV (75 aa)) folds into the Ubiquitin-like domain. Positions 99–274 (PHTTPKPASI…LLAAAERRKQ (176 aa)) constitute a WLM domain. H202 is a Zn(2+) binding site. Residue E203 is part of the active site. Zn(2+)-binding residues include H206 and H212. The disordered stretch occupies residues 234–282 (GKPGSYVSDRASYTPQQDNDDEDQKNHRRDLLLAAAERRKQSGSKVQKE). A compositionally biased stretch (basic and acidic residues) spans 269–282 (AERRKQSGSKVQKE).

It belongs to the peptidase M3 family. WSS1-like metalloprotease (WLM) subfamily. It depends on Zn(2+) as a cofactor.

Its subcellular location is the cytoplasm. The protein localises to the nucleus. Functionally, metalloendopeptidase that acts selectively on DNA-binding proteins. DNA is needed to bring the protease and substrates together to enable proteolysis. Involved in the repair of toxic DNA-protein cross-links (DPCs) such as covalently trapped topoisomerase 1 (TOP1) adducts on DNA lesions or DPCs induced by reactive compounds such as formaldehyde. In Schizosaccharomyces pombe (strain 972 / ATCC 24843) (Fission yeast), this protein is DNA-dependent metalloprotease WSS1 homolog 2.